Reading from the N-terminus, the 390-residue chain is Serpin B3 (390 aa).

The residue at position 1 (M1) is an N-acetylmethionine.

Belongs to the serpin family. Ov-serpin subfamily. In terms of assembly, interacts with MAPK8/JNK1. Squamous cells. Expressed in some hepatocellular carcinoma (at protein level).

The protein resides in the cytoplasm. Functionally, may act as a papain-like cysteine protease inhibitor to modulate the host immune response against tumor cells. Also functions as an inhibitor of UV-induced apoptosis via suppression of the activity of c-Jun NH(2)-terminal kinase (JNK1). This chain is Serpin B3 (SERPINB3), found in Homo sapiens (Human).